Here is a 429-residue protein sequence, read N- to C-terminus: Ribosomal RNA small subunit methyltransferase B (429 aa).

Residues 254–260 (CAAPGGK), D277, D303, and D322 contribute to the S-adenosyl-L-methionine site. C375 serves as the catalytic Nucleophile. The segment at 397-419 (ALSETGTPDQPGQQNLPGGEEGD) is disordered. Residues 400 to 412 (ETGTPDQPGQQNL) show a composition bias toward polar residues.

The protein belongs to the class I-like SAM-binding methyltransferase superfamily. RsmB/NOP family.

It is found in the cytoplasm. The enzyme catalyses cytidine(967) in 16S rRNA + S-adenosyl-L-methionine = 5-methylcytidine(967) in 16S rRNA + S-adenosyl-L-homocysteine + H(+). Its function is as follows. Specifically methylates the cytosine at position 967 (m5C967) of 16S rRNA. In Salmonella enteritidis PT4 (strain P125109), this protein is Ribosomal RNA small subunit methyltransferase B.